A 1039-amino-acid polypeptide reads, in one-letter code: DIS3-like exonuclease 1 (1039 aa).

The CSD1 domain occupies 221-309; that stretch reads PEHLPLEILE…KGRNGALCEN (89 aa). In terms of domain architecture, CSD2 spans 359 to 425; sequence VLVMPWDYRI…AEIATILVEN (67 aa). An RNB domain is found at 458–807; the sequence is RLDLRKTHLV…VHRLLLAAVN (350 aa).

It belongs to the RNR ribonuclease family. In terms of assembly, component of the RNA exosome complex. Mg(2+) is required as a cofactor.

It localises to the cytoplasm. It carries out the reaction Exonucleolytic cleavage in the 3'- to 5'-direction to yield nucleoside 5'-phosphates.. Functionally, catalytic component of the RNA exosome complex which has 3'-&gt;5' exoribonuclease activity and participates in a multitude of cellular RNA processing and degradation events. In Xenopus tropicalis (Western clawed frog), this protein is DIS3-like exonuclease 1 (dis3l).